We begin with the raw amino-acid sequence, 309 residues long: NAD kinase (309 aa).

Asp-89 serves as the catalytic Proton acceptor. Residues 89-90, 163-164, His-174, Arg-191, Asp-193, and 204-209 each bind NAD(+); these read DG, NE, and TAYSLS.

This sequence belongs to the NAD kinase family. A divalent metal cation is required as a cofactor.

The protein resides in the cytoplasm. It carries out the reaction NAD(+) + ATP = ADP + NADP(+) + H(+). Involved in the regulation of the intracellular balance of NAD and NADP, and is a key enzyme in the biosynthesis of NADP. Catalyzes specifically the phosphorylation on 2'-hydroxyl of the adenosine moiety of NAD to yield NADP. The sequence is that of NAD kinase from Shewanella denitrificans (strain OS217 / ATCC BAA-1090 / DSM 15013).